The sequence spans 1063 residues: Cation efflux system protein CzcA (1063 aa).

A run of 10 helical transmembrane segments spans residues 14–29 (WLVL…LGIF), 350–370 (GAVL…AALI), 452–472 (LIFG…LTGV), 487–507 (ALLG…ALFI), 534–554 (LANT…CVAI), 883–903 (VVVP…FNNI), 906–926 (GLLV…ALWI), 937–957 (VGFI…LSFI), 982–1004 (VLMT…GTGA), and 1013–1033 (VVIG…PVLY). The interval 1040 to 1063 (DEDAEDTREPVTQTHQPDQGRQPA) is disordered. A compositionally biased stretch (polar residues) spans 1049 to 1063 (PVTQTHQPDQGRQPA).

This sequence belongs to the resistance-nodulation-cell division (RND) (TC 2.A.6) family.

It is found in the cell membrane. Functionally, has a low cation transport activity for cobalt, it is essential for the expression of cobalt, zinc, and cadmium resistance. CzcA and CzcB together would act in zinc efflux nearly as effectively as the complete CZC efflux system (CzcABC). In Alcaligenes sp. (strain CT14), this protein is Cation efflux system protein CzcA (czcA).